Here is a 40-residue protein sequence, read N- to C-terminus: Serine proteinase-like BMK-CBP (40 aa).

The 40-residue stretch at 1-40 (IFGGTFAKNGEYPWMVVIDLPEFACGGVLISKKFVLTAAH) folds into the Peptidase S1 domain. Histidine 40 (charge relay system) is an active-site residue.

The protein belongs to the peptidase S1 family. As to expression, expressed by the venom gland.

It localises to the secreted. Its function is as follows. Binds in a dose-dependent manner to the breast cancer cell line MCF-7. The protein is Serine proteinase-like BMK-CBP of Olivierus martensii (Manchurian scorpion).